The following is a 156-amino-acid chain: MADPARAKRLAKRISTIVASAIEYEIKDPRLAGVTITDAKVSGDLHDATLYYTVLGASLDEDPDYEGAAAALEKAKGVLRTKVGAGTGVRFTPTLAFVRDTVPDAAHRMEELLARARAADEDLARVREGAKHAGDPDPYRVGGAEDTDGDTDGDER.

Residues 125–138 (RVREGAKHAGDPDP) show a composition bias toward basic and acidic residues. A disordered region spans residues 125-156 (RVREGAKHAGDPDPYRVGGAEDTDGDTDGDER). Over residues 145 to 156 (EDTDGDTDGDER) the composition is skewed to acidic residues.

The protein belongs to the RbfA family. In terms of assembly, monomer. Binds 30S ribosomal subunits, but not 50S ribosomal subunits or 70S ribosomes.

The protein localises to the cytoplasm. One of several proteins that assist in the late maturation steps of the functional core of the 30S ribosomal subunit. Associates with free 30S ribosomal subunits (but not with 30S subunits that are part of 70S ribosomes or polysomes). Required for efficient processing of 16S rRNA. May interact with the 5'-terminal helix region of 16S rRNA. The protein is Ribosome-binding factor A of Mycolicibacterium smegmatis (strain ATCC 700084 / mc(2)155) (Mycobacterium smegmatis).